The chain runs to 464 residues: Rab GDP-dissociation inhibitor (464 aa).

Belongs to the Rab GDI family. As to quaternary structure, interacts with the GDP-bound form of Rab GTPase YPT7.

In terms of biological role, regulates the GDP/GTP exchange reaction of YPT7 by inhibiting the dissociation of GDP from it, and the subsequent binding of GTP to YTP7. In Pyricularia oryzae (strain 70-15 / ATCC MYA-4617 / FGSC 8958) (Rice blast fungus), this protein is Rab GDP-dissociation inhibitor (GDI1).